The following is a 480-amino-acid chain: RuvB-like helicase 2 (480 aa).

73-80 (GEPSTGKT) is a binding site for ATP.

It belongs to the RuvB family. Forms homohexameric rings. May form a dodecamer with rept made of two stacked hexameric rings. Component of the chromatin remodeling Ino80 complex.

It is found in the nucleus. It catalyses the reaction ATP + H2O = ADP + phosphate + H(+). Functionally, acts as a transcriptional coactivator in Wg signaling caused by altered arm signaling. Pont and rept interfere antagonistically with nuclear arm signaling function, and are required to enhance or reduce arm activity, respectively. Also an essential cofactor for the normal function of Myc; required for cellular proliferation and growth. In terms of biological role, proposed core component of the chromatin remodeling Ino80 complex which is involved in transcriptional regulation, DNA replication and probably DNA repair. In Drosophila pseudoobscura pseudoobscura (Fruit fly), this protein is RuvB-like helicase 2.